A 698-amino-acid chain; its full sequence is Serine/threonine-protein kinase Nek8 (698 aa).

Positions 4 to 258 (YERIRVVGRG…LSHIMAQPLC (255 aa)) constitute a Protein kinase domain. ATP-binding positions include 10–18 (VGRGAFGIV) and Lys33. Asp128 serves as the catalytic Proton acceptor. Position 162 is a phosphothreonine; by autocatalysis (Thr162). A disordered region spans residues 278–309 (EKSLTPGPPIASGSTGSRATSARCRGVPRGPV). A compositionally biased stretch (low complexity) spans 288-309 (ASGSTGSRATSARCRGVPRGPV). RCC1 repeat units follow at residues 416 to 467 (GIIM…LSTD), 468 to 519 (GELF…LTSP), 520 to 585 (GRVL…ITAS), 586 to 637 (GDCY…VGAE), and 638 to 690 (GEVY…AVRS).

This sequence belongs to the protein kinase superfamily. NEK Ser/Thr protein kinase family. NIMA subfamily. Interacts with PKD2; may regulate PKD2 targeting to the cilium. Interacts with ANKS6. Component of a complex containing at least ANKS6, INVS, NEK8 and NPHP3. ANKS6 may organize complex assembly by linking INVS and NPHP3 to NEK8 and INVS may target the complex to the proximal ciliary axoneme. Interacts with ANKS3. Mg(2+) is required as a cofactor. In terms of tissue distribution, kidney, liver, and testis.

The protein resides in the cytoplasm. Its subcellular location is the cytoskeleton. The protein localises to the cell projection. It localises to the cilium. It is found in the microtubule organizing center. The protein resides in the centrosome. Its subcellular location is the cilium axoneme. The enzyme catalyses L-seryl-[protein] + ATP = O-phospho-L-seryl-[protein] + ADP + H(+). It carries out the reaction L-threonyl-[protein] + ATP = O-phospho-L-threonyl-[protein] + ADP + H(+). Functionally, required for renal tubular integrity. May regulate local cytoskeletal structure in kidney tubule epithelial cells. May regulate ciliary biogenesis through targeting of proteins to the cilia. Plays a role in organogenesis and is involved in the regulation of the Hippo signaling pathway. This chain is Serine/threonine-protein kinase Nek8 (Nek8), found in Mus musculus (Mouse).